We begin with the raw amino-acid sequence, 393 residues long: MSEQTQTCASEIQATNVAVQHPKSEKINLMNLTRKEMRELFAEMGEKPFRADQLMKWIYHFGEDNFDNMSNINKVLREKLKQIAEIKAPEVSVEQRSSDGTIKWAMQVGDQQIETVYIPEDDRATLCVSSQVGCALACKFCSTAQQGFNRNLTVSEIIGQVWRASKIIGNFGITGVRPITNVVMMGMGEPLLNLNNVIPAMEIMLDDFAYGLSKRRVTLSTAGVVPALDIMREKIDVALAISLHAPNDELRDEIMPINKKYNIKMLMDSVHKYLEVSNANHGKVTIEYVLLDHVNDGTEHAHQLAEVLKNTPCKINLIPWNPFPEAPYGKSSNSRVDRFQKTLMEYGFTVIVRKTRGDDIDAACGQLAGDVIDRTKRTMEKRKFGKGIAVQNH.

Residue Glu-114 is the Proton acceptor of the active site. One can recognise a Radical SAM core domain in the interval 120–359 (EDDRATLCVS…VIVRKTRGDD (240 aa)). Cys-127 and Cys-364 are oxidised to a cystine. [4Fe-4S] cluster-binding residues include Cys-134, Cys-138, and Cys-141. S-adenosyl-L-methionine-binding positions include 188-189 (GE), Ser-220, 242-244 (SLH), and Asn-321. Cys-364 serves as the catalytic S-methylcysteine intermediate.

Belongs to the radical SAM superfamily. RlmN family. [4Fe-4S] cluster is required as a cofactor.

It localises to the cytoplasm. It catalyses the reaction adenosine(2503) in 23S rRNA + 2 reduced [2Fe-2S]-[ferredoxin] + 2 S-adenosyl-L-methionine = 2-methyladenosine(2503) in 23S rRNA + 5'-deoxyadenosine + L-methionine + 2 oxidized [2Fe-2S]-[ferredoxin] + S-adenosyl-L-homocysteine. The catalysed reaction is adenosine(37) in tRNA + 2 reduced [2Fe-2S]-[ferredoxin] + 2 S-adenosyl-L-methionine = 2-methyladenosine(37) in tRNA + 5'-deoxyadenosine + L-methionine + 2 oxidized [2Fe-2S]-[ferredoxin] + S-adenosyl-L-homocysteine. Its function is as follows. Specifically methylates position 2 of adenine 2503 in 23S rRNA and position 2 of adenine 37 in tRNAs. m2A2503 modification seems to play a crucial role in the proofreading step occurring at the peptidyl transferase center and thus would serve to optimize ribosomal fidelity. The polypeptide is Dual-specificity RNA methyltransferase RlmN (Actinobacillus pleuropneumoniae serotype 5b (strain L20)).